The chain runs to 72 residues: Translation initiation factor IF-1 (72 aa).

The S1-like domain maps to 1–72 (MAKDDVIEVE…TRGRITYRFK (72 aa)).

This sequence belongs to the IF-1 family. As to quaternary structure, component of the 30S ribosomal translation pre-initiation complex which assembles on the 30S ribosome in the order IF-2 and IF-3, IF-1 and N-formylmethionyl-tRNA(fMet); mRNA recruitment can occur at any time during PIC assembly.

It localises to the cytoplasm. In terms of biological role, one of the essential components for the initiation of protein synthesis. Stabilizes the binding of IF-2 and IF-3 on the 30S subunit to which N-formylmethionyl-tRNA(fMet) subsequently binds. Helps modulate mRNA selection, yielding the 30S pre-initiation complex (PIC). Upon addition of the 50S ribosomal subunit IF-1, IF-2 and IF-3 are released leaving the mature 70S translation initiation complex. The protein is Translation initiation factor IF-1 of Streptococcus gordonii (strain Challis / ATCC 35105 / BCRC 15272 / CH1 / DL1 / V288).